The primary structure comprises 489 residues: Probable cytochrome P450 522A1 (489 aa).

A helical membrane pass occupies residues Met1–Asn21. Cys433 contacts heme.

This sequence belongs to the cytochrome P450 family. Heme is required as a cofactor.

Its subcellular location is the membrane. The polypeptide is Probable cytochrome P450 522A1 (cyp522A1) (Dictyostelium discoideum (Social amoeba)).